Consider the following 157-residue polypeptide: DNA gyrase inhibitor (157 aa).

It belongs to the DNA gyrase inhibitor family. In terms of assembly, interacts with DNA gyrase.

The protein localises to the cytoplasm. In terms of biological role, inhibits the supercoiling activity of DNA gyrase. Acts by inhibiting DNA gyrase at an early step, prior to (or at the step of) binding of DNA by the gyrase. It protects cells against toxins that target DNA gyrase, by inhibiting activity of these toxins and reducing the formation of lethal double-strand breaks in the cell. The sequence is that of DNA gyrase inhibitor from Shigella boydii serotype 18 (strain CDC 3083-94 / BS512).